Reading from the N-terminus, the 466-residue chain is Ribulose bisphosphate carboxylase large chain (466 aa).

Lys5 carries the N6,N6,N6-trimethyllysine modification. 2 residues coordinate substrate: Asn114 and Thr164. Residue Lys166 is the Proton acceptor of the active site. Lys168 contacts substrate. Positions 192, 194, and 195 each coordinate Mg(2+). An N6-carboxylysine modification is found at Lys192. The active-site Proton acceptor is His285. Arg286, His318, and Ser370 together coordinate substrate.

The protein belongs to the RuBisCO large chain family. Type I subfamily. In terms of assembly, heterohexadecamer of 8 large chains and 8 small chains; disulfide-linked. The disulfide link is formed within the large subunit homodimers. Requires Mg(2+) as cofactor. Post-translationally, the disulfide bond which can form in the large chain dimeric partners within the hexadecamer appears to be associated with oxidative stress and protein turnover.

The protein resides in the plastid. The protein localises to the chloroplast. It carries out the reaction 2 (2R)-3-phosphoglycerate + 2 H(+) = D-ribulose 1,5-bisphosphate + CO2 + H2O. The enzyme catalyses D-ribulose 1,5-bisphosphate + O2 = 2-phosphoglycolate + (2R)-3-phosphoglycerate + 2 H(+). RuBisCO catalyzes two reactions: the carboxylation of D-ribulose 1,5-bisphosphate, the primary event in carbon dioxide fixation, as well as the oxidative fragmentation of the pentose substrate in the photorespiration process. Both reactions occur simultaneously and in competition at the same active site. The polypeptide is Ribulose bisphosphate carboxylase large chain (Saururus cernuus (Lizard's tail)).